A 245-amino-acid polypeptide reads, in one-letter code: MHNYKLTIQYDGARFKGWQRLGNNDNTIQGKIESVISEMVGKEIEIIGCSRTDAGVHALNQVANFQSDEKLVEHKVKKYLNQYLPNDISITNVEEVHDRFHARYNSKAKTYLYKIWNEEHTNPFMRKYSMHVNKKLNVKSMKAAAKHLVGSHDFTAFSNAKSKKKSMVREVYTLDVMEEAGFVQIRVSGNGFLHNMVRKIVGALIEVGLGQLDAEAIPNILEEKQRNQINCLAEASGLYLENVEF.

Asp-53 acts as the Nucleophile in catalysis. Residue Tyr-111 coordinates substrate.

Belongs to the tRNA pseudouridine synthase TruA family. Homodimer.

The catalysed reaction is uridine(38/39/40) in tRNA = pseudouridine(38/39/40) in tRNA. In terms of biological role, formation of pseudouridine at positions 38, 39 and 40 in the anticodon stem and loop of transfer RNAs. This Bacillus cereus (strain ATCC 14579 / DSM 31 / CCUG 7414 / JCM 2152 / NBRC 15305 / NCIMB 9373 / NCTC 2599 / NRRL B-3711) protein is tRNA pseudouridine synthase A 2.